Reading from the N-terminus, the 98-residue chain is NADH-ubiquinone oxidoreductase chain 4L (98 aa).

3 helical membrane passes run 1 to 21 (MSLV…GLLM), 29 to 49 (SLLC…LTIL), and 59 to 79 (MPII…SLLV).

It belongs to the complex I subunit 4L family. As to quaternary structure, core subunit of respiratory chain NADH dehydrogenase (Complex I) which is composed of 45 different subunits.

It localises to the mitochondrion inner membrane. It carries out the reaction a ubiquinone + NADH + 5 H(+)(in) = a ubiquinol + NAD(+) + 4 H(+)(out). In terms of biological role, core subunit of the mitochondrial membrane respiratory chain NADH dehydrogenase (Complex I) which catalyzes electron transfer from NADH through the respiratory chain, using ubiquinone as an electron acceptor. Part of the enzyme membrane arm which is embedded in the lipid bilayer and involved in proton translocation. This Cervus elaphus (Red deer) protein is NADH-ubiquinone oxidoreductase chain 4L (MT-ND4L).